A 652-amino-acid chain; its full sequence is DNA ligase (652 aa).

NAD(+)-binding positions include 29-33 (DAEYD), 78-79 (SL), and Glu107. The N6-AMP-lysine intermediate role is filled by Lys109. NAD(+) contacts are provided by Arg130, Glu164, Lys278, and Lys302. Residues Cys395, Cys398, Cys413, and Cys418 each coordinate Zn(2+). The BRCT domain occupies 577–652 (DENAALSGMT…IKDEAWLESL (76 aa)).

It belongs to the NAD-dependent DNA ligase family. LigA subfamily. It depends on Mg(2+) as a cofactor. Mn(2+) serves as cofactor.

The enzyme catalyses NAD(+) + (deoxyribonucleotide)n-3'-hydroxyl + 5'-phospho-(deoxyribonucleotide)m = (deoxyribonucleotide)n+m + AMP + beta-nicotinamide D-nucleotide.. Its function is as follows. DNA ligase that catalyzes the formation of phosphodiester linkages between 5'-phosphoryl and 3'-hydroxyl groups in double-stranded DNA using NAD as a coenzyme and as the energy source for the reaction. It is essential for DNA replication and repair of damaged DNA. The polypeptide is DNA ligase (Streptococcus suis (strain 98HAH33)).